Reading from the N-terminus, the 197-residue chain is Penicillin-binding protein activator LpoB (197 aa).

A signal peptide spans 1-17; sequence MIKRMSGIALAALLLSG. Cys-18 carries the N-palmitoyl cysteine lipid modification. The S-diacylglycerol cysteine moiety is linked to residue Cys-18. The tract at residues 23–57 is disordered; it reads PRGETPSQPPAPTTPAKPSVVPTPTPPVVTPVPQP. Pro residues predominate over residues 29–57; it reads SQPPAPTTPAKPSVVPTPTPPVVTPVPQP.

It belongs to the LpoB family. Interacts with PBP1b.

The protein resides in the cell outer membrane. Its function is as follows. Regulator of peptidoglycan synthesis that is essential for the function of penicillin-binding protein 1B (PBP1b). This is Penicillin-binding protein activator LpoB from Edwardsiella piscicida.